Reading from the N-terminus, the 171-residue chain is Der GTPase-activating protein YihI (171 aa).

Disordered stretches follow at residues 1 to 99 (MKKP…PQAE) and 145 to 171 (GLSY…KGGN). Residues 20–30 (TREELNQEARD) show a composition bias toward basic and acidic residues. A compositionally biased stretch (low complexity) spans 40–59 (HSAGSRANGSSASGSTAQNS). A compositionally biased stretch (acidic residues) spans 148-160 (YEDDEDDEEEEKQ).

The protein belongs to the YihI family. As to quaternary structure, interacts with Der.

In terms of biological role, a GTPase-activating protein (GAP) that modifies Der/EngA GTPase function. May play a role in ribosome biogenesis. The polypeptide is Der GTPase-activating protein YihI (Enterobacter sp. (strain 638)).